The following is a 48-amino-acid chain: Protein YgdT (48 aa).

In Escherichia coli (strain K12), this protein is Protein YgdT (ygdT).